The sequence spans 317 residues: GTPase Era (317 aa).

One can recognise an Era-type G domain in the interval 23-190; the sequence is RSGFVALIGP…MDYLVETLPE (168 aa). Residues 31 to 38 form a G1 region; the sequence is GPTNAGKS. Residue 31 to 38 coordinates GTP; it reads GPTNAGKS. A G2 region spans residues 57 to 61; that stretch reads QTTRA. The interval 78–81 is G3; sequence DTPG. GTP contacts are provided by residues 78 to 82 and 140 to 143; these read DTPGI and NKID. The tract at residues 140 to 143 is G4; sequence NKID. Positions 169 to 171 are G5; the sequence is ISA. One can recognise a KH type-2 domain in the interval 221 to 298; the sequence is LHQELPYASH…HLFLFVKVRE (78 aa).

This sequence belongs to the TRAFAC class TrmE-Era-EngA-EngB-Septin-like GTPase superfamily. Era GTPase family. In terms of assembly, monomer.

The protein localises to the cytoplasm. It is found in the cell inner membrane. An essential GTPase that binds both GDP and GTP, with rapid nucleotide exchange. Plays a role in 16S rRNA processing and 30S ribosomal subunit biogenesis and possibly also in cell cycle regulation and energy metabolism. In Agrobacterium fabrum (strain C58 / ATCC 33970) (Agrobacterium tumefaciens (strain C58)), this protein is GTPase Era.